Consider the following 169-residue polypeptide: Protein ORFb in retron Ec67 (169 aa).

The polypeptide is Protein ORFb in retron Ec67 (Escherichia coli).